The sequence spans 203 residues: uncharacterized protein (203 aa).

The first 31 residues, 1-31 (MKKTFVKKAMLTTAAMTSAALLTFGPDAASA), serve as a signal peptide directing secretion.

This is an uncharacterized protein from Bacillus subtilis (strain 168).